Reading from the N-terminus, the 601-residue chain is MCSGPRKPSTPPLPQQQKEATVMAASLLLELAAADDVAAVRRVVEEEKVSLGVAGLWYGPSASGVARLGMERRTAAMVAALYGSTGVLGYVVAAAPAEAARASETDGATPLHMAAAGGAANAVAATRLLLAAGASVDALSASGLRAGDLLPRATAAEKAIRLLLKSPAVSPSSSPKKSASPPSPPPPQEAKKEYPPDLTLPDLKSGLFSTDEFRMYSFKVKPCSRAYSHDWTECPFVHPGENARRRDPRRYSYSCVPCPEFRKGGSCRKGDACEYAHGVFECWLHPAQYRTRLCKDEVGCARRICFFAHKPDELRAVNPSAVSVGMQPTVSSPRSSPPNGLDMAAAAAAMMSPAWPSSPASRLKTALGARELDFDLEMLALDQYQQKLFDKVSGAPSPRASWGAAANGLATASPARAVPDYTDLLGSVDPAMLSQLHALSLKQAGDMPAYSSMADTTQMHMPTSPMVGGANTAFGLDHSMAKAIMSSRASAFAKRSQSFIDRGGRAPAARSLMSPATTGAPSILSDWGSPDGKLDWGVQGDELHKLRKSASFAFRGQSAMPVATHAAAAEPDVSWVNSLVKDGHAAGDIFAQWPEQEQMVA.

2 ANK repeats span residues 71 to 101 (ERRT…EAAR) and 106 to 138 (DGAT…SVDA). The span at 167–180 (PAVSPSSSPKKSAS) shows a compositional bias: low complexity. The interval 167–203 (PAVSPSSSPKKSASPPSPPPPQEAKKEYPPDLTLPDL) is disordered. 2 C3H1-type zinc fingers span residues 252-280 (SYSC…HGVF) and 288-312 (QYRT…HKPD).

This is Zinc finger CCCH domain-containing protein 33 from Oryza sativa subsp. japonica (Rice).